Here is a 365-residue protein sequence, read N- to C-terminus: Class E basic helix-loop-helix protein 22 (365 aa).

Disordered regions lie at residues 34 to 93 (AFRS…GGGG), 134 to 156 (GRGSVAESSGGEQSPDDDSDGRC), and 188 to 225 (HLHGGAGLPPGGSTGSGGGGSGGGGGGGSSSKKSKEQK). Positions 82 to 93 (GGGGAGGGGGGG) are enriched in gly residues. Residues 191–216 (GGAGLPPGGSTGSGGGGSGGGGGGGS) are compositionally biased toward gly residues. The region spanning 226 to 280 (ALRLNINARERRRMHDLNDALDELRAVIPYAHSPSVRKLSKIATLLLAKNYILMQ) is the bHLH domain.

In terms of assembly, heterodimer with other bHLH proteins, like TCF3/E47. As to expression, kidney, lung, brain and pancreas (insulinoma).

The protein localises to the nucleus. Inhibits DNA binding of TCF3/E47 homodimers and TCF3 (E47)/NEUROD1 heterodimers and acts as a strong repressor of Neurod1 and Myod-responsive genes, probably by heterodimerization with class a basic helix-loop-helix factors. Despite the presence of an intact basic domain, does not bind to DNA. This Mesocricetus auratus (Golden hamster) protein is Class E basic helix-loop-helix protein 22 (BHLHE22).